A 157-amino-acid chain; its full sequence is Transcriptional repressor NrdR (157 aa).

A zinc finger spans residues 3-34 (CPFCSATDTKVIDSRLVADGHQVRRRRECLLC). The ATP-cone domain occupies 49-139 (PRVVKQDGSR…VYRAFEDVSE (91 aa)).

This sequence belongs to the NrdR family. The cofactor is Zn(2+).

In terms of biological role, negatively regulates transcription of bacterial ribonucleotide reductase nrd genes and operons by binding to NrdR-boxes. In Shewanella loihica (strain ATCC BAA-1088 / PV-4), this protein is Transcriptional repressor NrdR.